The following is a 387-amino-acid chain: Succinyl-diaminopimelate desuccinylase (387 aa).

His-74 provides a ligand contact to Zn(2+). Asp-76 is an active-site residue. Asp-107 serves as a coordination point for Zn(2+). Glu-142 functions as the Proton acceptor in the catalytic mechanism. Zn(2+)-binding residues include Glu-143, Glu-171, and His-360.

This sequence belongs to the peptidase M20A family. DapE subfamily. Homodimer. The cofactor is Zn(2+). Co(2+) serves as cofactor.

The catalysed reaction is N-succinyl-(2S,6S)-2,6-diaminopimelate + H2O = (2S,6S)-2,6-diaminopimelate + succinate. The protein operates within amino-acid biosynthesis; L-lysine biosynthesis via DAP pathway; LL-2,6-diaminopimelate from (S)-tetrahydrodipicolinate (succinylase route): step 3/3. In terms of biological role, catalyzes the hydrolysis of N-succinyl-L,L-diaminopimelic acid (SDAP), forming succinate and LL-2,6-diaminopimelate (DAP), an intermediate involved in the bacterial biosynthesis of lysine and meso-diaminopimelic acid, an essential component of bacterial cell walls. The polypeptide is Succinyl-diaminopimelate desuccinylase (Rhodopseudomonas palustris (strain ATCC BAA-98 / CGA009)).